Here is a 1360-residue protein sequence, read N- to C-terminus: Lysine-specific demethylase REF6 (1360 aa).

An N-acetylalanine modification is found at Ala2. The 42-residue stretch at 20–61 folds into the JmjN domain; it reads APEFRPTLAEFQDPIAYILKIEEEASRYGICKILPPLPPPSK. In terms of domain architecture, JmjC spans 203 to 369; that stretch reads ETAWNMRAMS…MAKDAAIRRA (167 aa). Positions 246, 248, and 337 each coordinate Fe cation. The disordered stretch occupies residues 652–698; it reads YGDSSDSEEEDQKGLVTPSSKGETKTYDQEGSDGHEEARDGRTSDFN. Positions 673–694 are enriched in basic and acidic residues; the sequence is GETKTYDQEGSDGHEEARDGRT. Positions 944–951 match the Nuclear localization signal motif; that stretch reads CRKRKIRA. Disordered stretches follow at residues 955-1012, 1044-1081, 1133-1155, and 1172-1238; these read PRKK…DPHK, AASE…SQQT, TGKR…QSSR, and EELD…NEEE. Polar residues-rich tracts occupy residues 994–1008 and 1046–1057; these read ETGN…NQMS and SESSMENGSQHS. Residues 1136 to 1147 are compositionally biased toward basic residues; the sequence is RQTRSTAKRIAK. A compositionally biased stretch (acidic residues) spans 1225-1238; it reads EKEEEEEEEENEEE. The segment at 1243-1266 adopts a C2H2-type 1; degenerate zinc-finger fold; sequence YQCNMEGCTMSFSSEKQLMLHKRN. Zn(2+)-binding residues include Cys1245, Cys1250, His1263, Cys1268, Cys1273, His1280, His1286, His1290, Cys1298, Cys1303, His1316, His1320, Cys1328, Cys1333, His1346, and His1352. C2H2-type zinc fingers lie at residues 1266 to 1290, 1296 to 1320, and 1326 to 1352; these read NICP…QRVH, LKCP…IRVH, and YVCA…KTGH. Positions 1275-1348 are DNA-binding; that stretch reads KNFFSHKYLV…FVSDFSRHKR (74 aa).

Belongs to the JHDM3 histone demethylase family. Forms homooligomers. Interacts with BZR2 (via N-terminus). Interacts with BRM in the SWI/SNF complex. Interacts (via N-terminus) with NFYC9. Associates with INO80. In terms of tissue distribution, highly expressed in the shoot apical meristem and primary and secondary root tips, and lower expression in cotyledons, leaves and root axis along vascular tissues. Detected in inflorescences, stems and siliques. Present in seeds.

The protein localises to the nucleus. It carries out the reaction N(6),N(6),N(6)-trimethyl-L-lysyl(27)-[histone H3] + 2-oxoglutarate + O2 = N(6),N(6)-dimethyl-L-lysyl(27)-[histone H3] + formaldehyde + succinate + CO2. The enzyme catalyses N(6),N(6)-dimethyl-L-lysyl(27)-[histone H3] + 2-oxoglutarate + O2 = N(6)-methyl-L-lysyl(27)-[histone H3] + formaldehyde + succinate + CO2. In terms of biological role, histone demethylase that demethylates 'Lys-27' (H3K27me) of histone H3, thus acting as a positive regulator of gene expression. Demethylates both tri- (H3K27me3) and di-methylated (H3K27me2) H3K27me. Also demethylates H3K4me3/2 and H3K36me3/2 in an in vitro assay. Involved in the transcriptional regulation of hundreds of genes regulating developmental patterning and responses to various stimuli. Binds DNA via its four zinc fingers in a sequence-specific manner, 5'-CTCTG(C/T)T(C/T)-3' (5'-CTCTGYTY-3'), with a preference for hypo-methylated status (e.g. cytosine methylation), to promote the demethylation of H3K27me3 and recruit the chromatin remodeler BRM in order to activate gene expression. Participates in the regulation of organ boundary formation. Bind mostly motifs located in active chromatin states which are depleted for heterochromatic modifications. Involved in the regulation of flowering time by repressing FLOWERING LOCUS C (FLC) expression. Stimulates lateral roots formation (e.g. primordium initiation and emergence) via the epigenetic de-repression of PIN genes such as PIN1, PIN3 and PIN7 directly by modulating the methylation status of their loci. Interacts with the NF-Y complex to regulate SOC1. Mediates the recruitment of BRM to its target loci. Together with EEN, involved in the epigenetic chromatin-dependent regulatory mechanism that monitors the expression of the essential multifunctional plant stress regulator EIN2 via H3K27me3 repressive histone demethylation and histone variant H2A.Z eviction, thus modulating responses to ethylene (ET), especially during embryogenesis. Eluviates seed dormancy by triggering abscisic acid (ABA) catabolism in seeds via the induction of CYP707A1 and CYP707A3 expression, genes involved in ABA degradation; binds directly to CYP707A1 and CYP707A3 loci to reduce their H3K27me3 levels in developing siliques. Required for systemic acquired resistance (SAR) toward pathogenic bacteria (e.g. Pseudomonas syringae pv tomato DC3000 (avrPto)). Together with FLD and MSI4/FVE, contributes to dehydroabietinal-dependent (DA, a diterpenoid tricyclic diterpene) activation of flowering ans SAR. Binds to the HSFA2 chromatin region to alleviate H3K27me3 repressive marks and trigger its expression in response to heat in a BRM-dependent manner. Involved in the mechanisms necessary for quick response to heat and subsequent heritable transgenerational memory of heat acclimation (global warming) such as early flowering and attenuated immunity; this process includes epigenetic regulation as well as post-transcriptional gene silencing (PTGS). In response to heat, HSFA2 is activated and promotes the expression of REF6 which in turn derepresses HSFA2, thus establishing a heritable feedback loop able to trigger SGIP1 and subsequent SGIP1-mediated SGS3 degradation; this prevents the biosynthesis of trans-acting siRNA (tasiRNA) and leads to the release of HTT5, which drives early flowering but attenuates immunity. Involved in the maintenance of H3K27me1 histone marks on euchromatin in a PRC2-dependent manner, to maintain low-level basal expression of corresponding genes. Together with ELF6, required for H3K27me3 resetting (especially in constitutive heterochromatin within the pericentromeric regions) and transgenerational inheritance of histone marks, thus acting in safeguarding genome and epigenome integrity during sexual reproduction. The chain is Lysine-specific demethylase REF6 from Arabidopsis thaliana (Mouse-ear cress).